The following is a 458-amino-acid chain: ATP synthase subunit beta (458 aa).

148 to 155 (GGAGVGKT) serves as a coordination point for ATP.

It belongs to the ATPase alpha/beta chains family. In terms of assembly, F-type ATPases have 2 components, CF(1) - the catalytic core - and CF(0) - the membrane proton channel. CF(1) has five subunits: alpha(3), beta(3), gamma(1), delta(1), epsilon(1). CF(0) has three main subunits: a(1), b(2) and c(9-12). The alpha and beta chains form an alternating ring which encloses part of the gamma chain. CF(1) is attached to CF(0) by a central stalk formed by the gamma and epsilon chains, while a peripheral stalk is formed by the delta and b chains.

It localises to the cell inner membrane. The enzyme catalyses ATP + H2O + 4 H(+)(in) = ADP + phosphate + 5 H(+)(out). In terms of biological role, produces ATP from ADP in the presence of a proton gradient across the membrane. The catalytic sites are hosted primarily by the beta subunits. This is ATP synthase subunit beta from Pseudomonas fluorescens (strain ATCC BAA-477 / NRRL B-23932 / Pf-5).